A 245-amino-acid polypeptide reads, in one-letter code: rRNA adenine N-6-methyltransferase (245 aa).

S-adenosyl-L-methionine contacts are provided by N10, L12, G37, E58, D83, and N100.

This sequence belongs to the class I-like SAM-binding methyltransferase superfamily. rRNA adenine N(6)-methyltransferase family.

The catalysed reaction is adenosine(2085) in 23S rRNA + 2 S-adenosyl-L-methionine = N(6)-dimethyladenosine(2085) in 23S rRNA + 2 S-adenosyl-L-homocysteine + 2 H(+). Functionally, this protein produces a dimethylation of the adenine residue at position 2085 in 23S rRNA, resulting in reduced affinity between ribosomes and macrolide-lincosamide-streptogramin B antibiotics. This is rRNA adenine N-6-methyltransferase (ermBC) from Escherichia coli.